Here is a 383-residue protein sequence, read N- to C-terminus: ATP phosphoribosyltransferase regulatory subunit (383 aa).

It belongs to the class-II aminoacyl-tRNA synthetase family. HisZ subfamily. In terms of assembly, heteromultimer composed of HisG and HisZ subunits.

Its subcellular location is the cytoplasm. It participates in amino-acid biosynthesis; L-histidine biosynthesis; L-histidine from 5-phospho-alpha-D-ribose 1-diphosphate: step 1/9. Required for the first step of histidine biosynthesis. May allow the feedback regulation of ATP phosphoribosyltransferase activity by histidine. The protein is ATP phosphoribosyltransferase regulatory subunit of Neisseria gonorrhoeae (strain NCCP11945).